A 346-amino-acid chain; its full sequence is DNA-directed RNA polymerase subunit alpha (346 aa).

The interval 1–242 (MLIQDGDKLI…DQLSVFINFD (242 aa)) is alpha N-terminal domain (alpha-NTD). The tract at residues 258–346 (LNPNLFKSID…WLKRKEKNEA (89 aa)) is alpha C-terminal domain (alpha-CTD).

This sequence belongs to the RNA polymerase alpha chain family. Homodimer. The RNAP catalytic core consists of 2 alpha, 1 beta, 1 beta' and 1 omega subunit. When a sigma factor is associated with the core the holoenzyme is formed, which can initiate transcription.

The enzyme catalyses RNA(n) + a ribonucleoside 5'-triphosphate = RNA(n+1) + diphosphate. DNA-dependent RNA polymerase catalyzes the transcription of DNA into RNA using the four ribonucleoside triphosphates as substrates. This Maridesulfovibrio salexigens (strain ATCC 14822 / DSM 2638 / NCIMB 8403 / VKM B-1763) (Desulfovibrio salexigens) protein is DNA-directed RNA polymerase subunit alpha.